A 437-amino-acid polypeptide reads, in one-letter code: MSMFLDTAKISVQAGRGGDGMVAFRREKYVPNGGPWGGDGGKGGSVIFKVDEGLRTLMDFRYNRKFKAKNGEKGMTKGMHGRGAEDLIVSIPPGTTVRDAETGKVITDMVEDGQEFVVAHGGRGGRGNIRFATPRNPAPEIAENGEPGEERELQLELKILADVGLVGFPSVGKSTILSVVTAAKPKIGAYHFTTIVPNLGMVRTKSGESFAMADLPGLIEGASQGVGLGTQFLRHIERTRVILHVIDMSASEGRDPYEDYLQINKELETYNLRLMERPQIIVANKMDMPEAEENLKEFKEKLAANYDEFDELPQIFPISSLAHQGLENLLEATAELLDQTDEFLLYNEDDMEQEEVYYGFNEEERPFEISRDDDASWVLSGEKLEKLFVMTNMERDESIMKFARQLRGMGVDEALRERGAKDGDIVRIGNFEFEFVD.

Residues 2-160 (SMFLDTAKIS…RELQLELKIL (159 aa)) form the Obg domain. A disordered region spans residues 127-146 (GNIRFATPRNPAPEIAENGE). Positions 161–338 (ADVGLVGFPS…LLEATAELLD (178 aa)) constitute an OBG-type G domain. GTP-binding positions include 167-174 (GFPSVGKS), 192-196 (FTTIV), 214-217 (DLPG), 284-287 (NKMD), and 319-321 (SSL). S174 and T194 together coordinate Mg(2+). An OCT domain is found at 359-437 (GFNEEERPFE…IGNFEFEFVD (79 aa)).

Belongs to the TRAFAC class OBG-HflX-like GTPase superfamily. OBG GTPase family. Monomer. Mg(2+) is required as a cofactor.

The protein resides in the cytoplasm. Functionally, an essential GTPase which binds GTP, GDP and possibly (p)ppGpp with moderate affinity, with high nucleotide exchange rates and a fairly low GTP hydrolysis rate. Plays a role in control of the cell cycle, stress response, ribosome biogenesis and in those bacteria that undergo differentiation, in morphogenesis control. The sequence is that of GTPase Obg from Streptococcus thermophilus (strain ATCC BAA-491 / LMD-9).